The primary structure comprises 542 residues: Phenylalanine--tRNA ligase beta subunit (542 aa).

Positions 269–344 constitute a B5 domain; the sequence is LRRYTVSVSA…MTIGYDKLSP (76 aa). Residues D322, D328, E331, and E332 each coordinate Mg(2+).

The protein belongs to the phenylalanyl-tRNA synthetase beta subunit family. Type 2 subfamily. Tetramer of two alpha and two beta subunits. The cofactor is Mg(2+).

It localises to the cytoplasm. The enzyme catalyses tRNA(Phe) + L-phenylalanine + ATP = L-phenylalanyl-tRNA(Phe) + AMP + diphosphate + H(+). In Sulfolobus acidocaldarius (strain ATCC 33909 / DSM 639 / JCM 8929 / NBRC 15157 / NCIMB 11770), this protein is Phenylalanine--tRNA ligase beta subunit.